A 148-amino-acid polypeptide reads, in one-letter code: Cathelicidin-1 (148 aa).

An N-terminal signal peptide occupies residues 1–17 (MLSCWVLLLALLGGACA). Positions 18–122 (LPAPLGYSQA…TCVDSMADPV (105 aa)) are excised as a propeptide. 2 disulfides stabilise this stretch: Cys75/Cys86 and Cys97/Cys114.

Belongs to the cathelicidin family. As to expression, detected in gizzard, liver, small intestine, large intestine, cloaca, bursa of Fabricius, gall bladder, lung, trachea, kidney, testis and bone marrow.

It localises to the secreted. Binds bacterial lipopolysaccharide (LPS). Has potent antimicrobial activity against Gram-positive and Gram-negative bacteria (in vitro). Has hemolytic activity (in vitro). May play a role in the innate immune response. The sequence is that of Cathelicidin-1 (CATHL1) from Gallus gallus (Chicken).